The primary structure comprises 218 residues: Ribose-5-phosphate isomerase A (218 aa).

Substrate is bound by residues 27 to 30 (TGST), 80 to 83 (DGAD), and 93 to 96 (KGGG). Catalysis depends on glutamate 102, which acts as the Proton acceptor. Lysine 120 is a substrate binding site.

This sequence belongs to the ribose 5-phosphate isomerase family. As to quaternary structure, homodimer.

It carries out the reaction aldehydo-D-ribose 5-phosphate = D-ribulose 5-phosphate. The protein operates within carbohydrate degradation; pentose phosphate pathway; D-ribose 5-phosphate from D-ribulose 5-phosphate (non-oxidative stage): step 1/1. Functionally, catalyzes the reversible conversion of ribose-5-phosphate to ribulose 5-phosphate. The sequence is that of Ribose-5-phosphate isomerase A from Picrophilus torridus (strain ATCC 700027 / DSM 9790 / JCM 10055 / NBRC 100828 / KAW 2/3).